A 284-amino-acid chain; its full sequence is tRNA pseudouridine synthase A (284 aa).

Aspartate 62 (nucleophile) is an active-site residue. Tyrosine 123 contacts substrate.

The protein belongs to the tRNA pseudouridine synthase TruA family. As to quaternary structure, homodimer.

The enzyme catalyses uridine(38/39/40) in tRNA = pseudouridine(38/39/40) in tRNA. Functionally, formation of pseudouridine at positions 38, 39 and 40 in the anticodon stem and loop of transfer RNAs. The polypeptide is tRNA pseudouridine synthase A (Streptomyces griseus subsp. griseus (strain JCM 4626 / CBS 651.72 / NBRC 13350 / KCC S-0626 / ISP 5235)).